We begin with the raw amino-acid sequence, 341 residues long: Basic membrane protein B (341 aa).

Positions 1–14 (MRIVIFILGILLTS) are cleaved as a signal peptide. Cys-15 carries N-palmitoyl cysteine lipidation. The S-diacylglycerol cysteine moiety is linked to residue Cys-15.

This sequence belongs to the BMP lipoprotein family. Monomer.

It is found in the cell inner membrane. Its function is as follows. May be part of an ABC-type nucleoside uptake system involved in the purine salvage pathway. This is Basic membrane protein B (bmpB) from Borrelia garinii subsp. bavariensis (strain ATCC BAA-2496 / DSM 23469 / PBi) (Borreliella bavariensis).